The following is a 397-amino-acid chain: Ribosomal RNA large subunit methyltransferase I (397 aa).

Positions 2-80 (SAAIYLVKGR…QDVNRAFFVK (79 aa)) constitute a PUA domain.

It belongs to the methyltransferase superfamily. RlmI family.

It localises to the cytoplasm. It catalyses the reaction cytidine(1962) in 23S rRNA + S-adenosyl-L-methionine = 5-methylcytidine(1962) in 23S rRNA + S-adenosyl-L-homocysteine + H(+). Functionally, specifically methylates the cytosine at position 1962 (m5C1962) of 23S rRNA. The protein is Ribosomal RNA large subunit methyltransferase I of Vibrio vulnificus (strain YJ016).